A 1786-amino-acid polypeptide reads, in one-letter code: Laminin subunit beta-1 (1786 aa).

Residues 1 to 21 (MGLLQVFAFGVLALWGTRVCA) form the signal peptide. The region spanning 31–270 (AEGSCYPATG…AVYDMVVRGN (240 aa)) is the Laminin N-terminal domain. N-linked (GlcNAc...) asparagine glycosylation is present at asparagine 120. Serine 250 is modified (phosphoserine). Disulfide bonds link cysteine 271/cysteine 280, cysteine 273/cysteine 298, cysteine 300/cysteine 309, cysteine 312/cysteine 332, cysteine 335/cysteine 344, cysteine 337/cysteine 362, cysteine 365/cysteine 374, cysteine 377/cysteine 395, cysteine 398/cysteine 411, cysteine 400/cysteine 426, cysteine 428/cysteine 437, cysteine 440/cysteine 455, cysteine 458/cysteine 472, cysteine 460/cysteine 479, cysteine 481/cysteine 490, cysteine 493/cysteine 507, cysteine 510/cysteine 522, cysteine 512/cysteine 529, and cysteine 531/cysteine 540. 4 Laminin EGF-like domains span residues 271–334 (CFCY…ACKK), 335–397 (CNCN…LCEP), 398–457 (CTCD…GCKS), and 458–509 (CACN…GCRP). Residue asparagine 356 is glycosylated (N-linked (GlcNAc...) asparagine). The region spanning 510 to 540 (CDCDLGGALNNSCSEDSGQCSCLPHMIGRQC) is the Laminin EGF-like 5; truncated domain. A glycan (N-linked (GlcNAc...) asparagine) is linked at asparagine 519. Residues 549–767 (FTTLDHYIYE…IIFSISALIH (219 aa)) form the Laminin IV type B domain. Asparagine 677 carries an N-linked (GlcNAc...) asparagine glycan. 32 cysteine pairs are disulfide-bonded: cysteine 773–cysteine 785, cysteine 775–cysteine 792, cysteine 794–cysteine 803, cysteine 806–cysteine 818, cysteine 821–cysteine 833, cysteine 823–cysteine 840, cysteine 842–cysteine 851, cysteine 854–cysteine 864, cysteine 867–cysteine 876, cysteine 869–cysteine 883, cysteine 886–cysteine 895, cysteine 898–cysteine 914, cysteine 917–cysteine 933, cysteine 919–cysteine 944, cysteine 946–cysteine 955, cysteine 958–cysteine 973, cysteine 976–cysteine 990, cysteine 978–cysteine 997, cysteine 1000–cysteine 1009, cysteine 1012–cysteine 1025, cysteine 1028–cysteine 1040, cysteine 1030–cysteine 1054, cysteine 1056–cysteine 1065, cysteine 1068–cysteine 1081, cysteine 1084–cysteine 1096, cysteine 1086–cysteine 1103, cysteine 1105–cysteine 1114, cysteine 1117–cysteine 1129, cysteine 1132–cysteine 1144, cysteine 1134–cysteine 1151, cysteine 1153–cysteine 1162, and cysteine 1165–cysteine 1176. 8 Laminin EGF-like domains span residues 773 to 820 (CECD…GCKP), 821 to 866 (CDCH…SCQP), 867 to 916 (CQCN…HCRP), 917 to 975 (CPCP…SCQP), 976 to 1027 (CQCH…DCRK), 1028 to 1083 (CVCN…GCGP), 1084 to 1131 (CNCN…ECRA), and 1132 to 1178 (CDCD…DCTP). A glycan (N-linked (GlcNAc...) asparagine) is linked at asparagine 1041. The segment at 1179 to 1397 (CHQCFALWDA…LDLSAVAQMT (219 aa)) is domain II. 4 N-linked (GlcNAc...) asparagine glycosylation sites follow: asparagine 1195, asparagine 1279, asparagine 1336, and asparagine 1343. The stretch at 1216–1315 (YRETVDSVEK…LEFIKNSDIQ (100 aa)) forms a coiled coil. Residues 1368–1388 (KEQQEEQARLLDELAGKLQSL) are a coiled coil. Residues 1398-1430 (CGTPPGADCSESECGGPNCRTDEGEKKCGGPGC) are domain alpha. Residues 1431–1786 (GGLVTVAHSA…EKVAVYSTCL (356 aa)) form a domain I region. A coiled-coil region spans residues 1448–1778 (DRDVLSALAE…RSLLKDISEK (331 aa)). Asparagine 1487 is a glycosylation site (N-linked (GlcNAc...) asparagine). Residue serine 1496 is modified to Phosphoserine. Asparagine 1542 and asparagine 1643 each carry an N-linked (GlcNAc...) asparagine glycan. Position 1666 is a phosphoserine (serine 1666).

In terms of assembly, laminin is a complex glycoprotein, consisting of three different polypeptide chains (alpha, beta, gamma), which are bound to each other by disulfide bonds into a cross-shaped molecule comprising one long and three short arms with globules at each end. Beta-1 is a subunit of laminin-1 (laminin-111 or EHS laminin), laminin-2 (laminin-211 or merosin), laminin-6 (laminin-311 or K-laminin), laminin-8 (laminin-411), laminin-10 (laminin-511) and laminin-12 (laminin-213). Interacts with ITGB1. In terms of tissue distribution, widely expressed in the embryo. High levels are detected in the cerebellar basement membrane, at postnatal day 7.

Its subcellular location is the secreted. The protein resides in the extracellular space. It is found in the extracellular matrix. It localises to the basement membrane. Functionally, binding to cells via a high affinity receptor, laminin is thought to mediate the attachment, migration and organization of cells into tissues during embryonic development by interacting with other extracellular matrix components. Involved in the organization of the laminar architecture of the cerebral cortex. It is probably required for the integrity of the basement membrane/glia limitans that serves as an anchor point for the endfeet of radial glial cells and as a physical barrier to migrating neurons. Radial glial cells play a central role in cerebral cortical development, where they act both as the proliferative unit of the cerebral cortex and a scaffold for neurons migrating toward the pial surface. The protein is Laminin subunit beta-1 (Lamb1) of Mus musculus (Mouse).